Here is a 337-residue protein sequence, read N- to C-terminus: Mitochondrial metalloendopeptidase OMA1 (337 aa).

The Mitochondrial matrix segment spans residues 1–68 (MFLNKYISNY…QPNPRDKRFQ (68 aa)). The helical transmembrane segment at 69–89 (WIFGALIAGGGVYYFTHLEYV) threads the bilayer. Residues 90 to 337 (PISNRRRFND…MLQSFKEVHW (248 aa)) are Mitochondrial intermembrane-facing. Histidine 195 provides a ligand contact to Zn(2+). The active site involves glutamate 196. Zn(2+) contacts are provided by histidine 199 and glutamate 250. The cysteines at positions 265 and 321 are disulfide-linked.

This sequence belongs to the peptidase M48 family. Zn(2+) serves as cofactor.

It localises to the mitochondrion inner membrane. With respect to regulation, protease activity is induced in response to various mitochondrial stress. Its function is as follows. Protease that is part of the quality control system in the inner membrane of mitochondria. Cleaves and thereby promotes the turnover of mistranslated or misfolded membrane protein. The protein is Mitochondrial metalloendopeptidase OMA1 of Schizosaccharomyces pombe (strain 972 / ATCC 24843) (Fission yeast).